Consider the following 166-residue polypeptide: MEFTGRVWKFGKDIDTDAIIPARYLNTTSPEELAKHCMEDADPSFPQKVRKGDIIVADKNFGCGSSREHAPIAIKAAGVPCVIAKSFARIFFRNAINIGLPIFECPEAVDGIREGDVVQVNADRGVIFNMTTGQTYTAKALPASMQSIIQAGGLMQYVKTRVAEGK.

The protein belongs to the LeuD family. LeuD type 2 subfamily. Heterodimer of LeuC and LeuD.

The enzyme catalyses (2R,3S)-3-isopropylmalate = (2S)-2-isopropylmalate. It functions in the pathway amino-acid biosynthesis; L-leucine biosynthesis; L-leucine from 3-methyl-2-oxobutanoate: step 2/4. Its function is as follows. Catalyzes the isomerization between 2-isopropylmalate and 3-isopropylmalate, via the formation of 2-isopropylmaleate. This is 3-isopropylmalate dehydratase small subunit from Heliobacterium modesticaldum (strain ATCC 51547 / Ice1).